A 114-amino-acid polypeptide reads, in one-letter code: UPF0342 protein LCA_0622 (114 aa).

It belongs to the UPF0342 family.

The polypeptide is UPF0342 protein LCA_0622 (Latilactobacillus sakei subsp. sakei (strain 23K) (Lactobacillus sakei subsp. sakei)).